Consider the following 210-residue polypeptide: ATP-dependent dethiobiotin synthetase BioD (210 aa).

G13–V18 serves as a coordination point for ATP. T17 is a Mg(2+) binding site. The active site involves K33. Residue E101 participates in Mg(2+) binding. ATP contacts are provided by residues E101–G104 and P185–L187.

It belongs to the dethiobiotin synthetase family. As to quaternary structure, homodimer. Mg(2+) serves as cofactor.

It is found in the cytoplasm. The catalysed reaction is (7R,8S)-7,8-diammoniononanoate + CO2 + ATP = (4R,5S)-dethiobiotin + ADP + phosphate + 3 H(+). The protein operates within cofactor biosynthesis; biotin biosynthesis; biotin from 7,8-diaminononanoate: step 1/2. Functionally, catalyzes a mechanistically unusual reaction, the ATP-dependent insertion of CO2 between the N7 and N8 nitrogen atoms of 7,8-diaminopelargonic acid (DAPA, also called 7,8-diammoniononanoate) to form a ureido ring. In Bradyrhizobium sp. (strain BTAi1 / ATCC BAA-1182), this protein is ATP-dependent dethiobiotin synthetase BioD.